A 336-amino-acid chain; its full sequence is L-Ala-D/L-amino acid epimerase (336 aa).

Substrate contacts are provided by residues T130 and 152–154; that span reads KIK. Residues D178, E204, and D229 each contribute to the Mg(2+) site. Substrate is bound by residues K251 and 301 to 303; that span reads DMD.

The protein belongs to the mandelate racemase/muconate lactonizing enzyme family. It depends on Mg(2+) as a cofactor.

In terms of biological role, catalyzes the epimerization of D-Ala-D-Ala to D-Ala-L-Ala. Has broad substrate specificity and catalyzes the epimerization of a variety of dipeptides containing an N-terminal Ala followed by Ser, Thr, Val, Met, His, Phe or Trp (in vitro). The protein is L-Ala-D/L-amino acid epimerase of Flavobacterium johnsoniae (strain ATCC 17061 / DSM 2064 / JCM 8514 / BCRC 14874 / CCUG 350202 / NBRC 14942 / NCIMB 11054 / UW101) (Cytophaga johnsonae).